A 451-amino-acid chain; its full sequence is MEKQYLTVTALTRYIKTKIEYDPHLQSVWLKGEISNFKYHSRGHMYFTLKDENARIAAVMFAGHNRNIKFRPEDGMKVLVKGKISVYEASGSYQIYVHDMQPDGVGNLHLAYEQLKVRLEEEGLFSRVYKQPIPAYAKTIGVITSPTGAAIRDIITTIKRRYPIGNVIVFPVLVQGEFAAPSIVQAIQTANEMNDIDVLIVGRGGGSIEELWAFNEEIVARAIFASKIPIISAVGHETDFTIADFVADLRAPTPTAAAELAVPNILEMQEKVLQRTLRLQRAMREIVHKRQERLQTLQKSYAFRYPRQIYEQKEEQLDRALEQLVLAKERYMEKKVNQLKQLSFYLEKHHPAQRISQTKIAIETLQKQLRREMQTVLQTKEFAFVRIAKQLEALSPLKVMMRGYGLVYSEKNQVLKSVKDVSAGDVVSVQLQDGILDCNVSSVKERESNGK.

The protein belongs to the XseA family. As to quaternary structure, heterooligomer composed of large and small subunits.

It is found in the cytoplasm. It carries out the reaction Exonucleolytic cleavage in either 5'- to 3'- or 3'- to 5'-direction to yield nucleoside 5'-phosphates.. Bidirectionally degrades single-stranded DNA into large acid-insoluble oligonucleotides, which are then degraded further into small acid-soluble oligonucleotides. This is Exodeoxyribonuclease 7 large subunit from Bacillus cytotoxicus (strain DSM 22905 / CIP 110041 / 391-98 / NVH 391-98).